A 903-amino-acid polypeptide reads, in one-letter code: Ras and Rab interactor 2 (903 aa).

Residues 44-73 (NGLEPSETHSMVRHKDGGYSEDKDGKTCPR) form a disordered region. Positions 56–73 (RHKDGGYSEDKDGKTCPR) are enriched in basic and acidic residues. In terms of domain architecture, SH2 spans 97–190 (WLQLSLSEEE…VLPFTLKLPY (94 aa)). 2 disordered regions span residues 282–455 (QDLS…EFDR) and 471–491 (EDYEGESDQETMAPPIKSKKK). Residues 306–315 (SPPPRPPPPA) are compositionally biased toward pro residues. Over residues 318 to 338 (SLHTSPGLSRTEPQTSMPETV) the composition is skewed to polar residues. Ser-366 is subject to Phosphoserine. A compositionally biased stretch (pro residues) spans 419-431 (APPPGSESQPPPC). Residues 439 to 450 (SDMSLSTSSSDS) show a composition bias toward low complexity. The tract at residues 506–775 (LRKMSGVFSS…ARLLSSEARD (270 aa)) is interaction with RAB5B. At Ser-510 the chain carries Phosphoserine. Thr-518 is subject to Phosphothreonine. A VPS9 domain is found at 627–766 (DGSWKQLKEN…IKNFQEEQAA (140 aa)). Residues 796–887 (FQNYLRVAFQ…FHFVYKRIKS (92 aa)) enclose the Ras-associating domain.

The protein belongs to the RIN (Ras interaction/interference) family. Homotetramer; probably composed of anti-parallel linkage of two parallel dimers. Interacts with Ras. Interacts with RAB5B, with a much higher affinity for GTP-bound activated RAB5B. Does not interact with other members of the Rab family.

It localises to the cytoplasm. Ras effector protein. May function as an upstream activator and/or downstream effector for RAB5B in endocytic pathway. May function as a guanine nucleotide exchange (GEF) of RAB5B, required for activating the RAB5 proteins by exchanging bound GDP for free GTP. This Mus musculus (Mouse) protein is Ras and Rab interactor 2 (Rin2).